Reading from the N-terminus, the 453-residue chain is Ankyrin repeat and SOCS box protein 16 (453 aa).

ANK repeat units follow at residues 56–85, 110–139, 142–171, 175–204, 209–238, 242–279, and 283–312; these read CRDPAVHQALFSGNLQQVQALFQDEEAANM, KQTAPLAIATARGYTDCARHLIRQGAELDA, GGRAALHEACARAQFDCVRLLLTFGAKANV, EGTTPLHLCTIPESLQCAKLLLEAGATVNL, SQETPLHVAAARGLEQHVALYLEHGADVGL, QGETALNTACAGAEGPGSCRRHQAAARRLLEAGADARA, and KRHTPLHNACANGCGGLAELLLRYGARAEV. In terms of domain architecture, SOCS box spans 398 to 450; it reads YSSALCMVNQPRQLQHLARLAVRARLGSRCRQGATRLPLPPLLRDYLLLRVEG.

It belongs to the ankyrin SOCS box (ASB) family.

Its pathway is protein modification; protein ubiquitination. Its function is as follows. May be a substrate-recognition component of a SCF-like ECS (Elongin-Cullin-SOCS-box protein) E3 ubiquitin-protein ligase complex which mediates the ubiquitination and subsequent proteasomal degradation of target proteins. This is Ankyrin repeat and SOCS box protein 16 (ASB16) from Homo sapiens (Human).